Consider the following 580-residue polypeptide: Guanine nucleotide-binding protein alpha-4 subunit (580 aa).

A compositionally biased stretch (polar residues) spans 1-10 (MSPSVSSPQL). Residues 1–28 (MSPSVSSPQLRHTKSNRAISRIDRTDPL) form a disordered region. A G-alpha domain is found at 93–579 (RVYKMVLLGQ…RENLKLTGLV (487 aa)). A G1 motif region spans residues 96 to 109 (KMVLLGQAGAGKTT). Residue 101 to 108 (GQAGAGKT) coordinates GTP. Disordered regions lie at residues 160–196 (KSSELSRLESSTSASTSTSASASSPKHVDTESQPNDA) and 302–325 (GRAAAARRETDGGDSQSESEKDNS). Low complexity predominate over residues 167-183 (LESSTSASTSTSASASS). Residues 387-395 (DILHSRVRT) form a G2 motif region. Residues 389–395 (LHSRVRT), 415–419 (DVGGS), 484–487 (NKID), and Ala-551 contribute to the GTP site. Thr-395 provides a ligand contact to Mg(2+). Positions 411–420 (YRIYDVGGSR) are G3 motif. Positions 480-487 (ILFLNKID) are G4 motif. Residues 549–554 (TVATST) are G5 motif.

This sequence belongs to the G-alpha family. G proteins are composed of 3 units; alpha, beta and gamma. The alpha chain contains the guanine nucleotide binding site.

In terms of biological role, guanine nucleotide-binding proteins (G proteins) are involved as modulators or transducers in various transmembrane signaling systems. This Mycosarcoma maydis (Corn smut fungus) protein is Guanine nucleotide-binding protein alpha-4 subunit (GPA4).